The following is a 202-amino-acid chain: Guanylate kinase (202 aa).

The Guanylate kinase-like domain maps to Leu18–Leu200. Residue Gly25–Ser32 coordinates ATP.

Belongs to the guanylate kinase family.

The catalysed reaction is GMP + ATP = GDP + ADP. Essential for recycling GMP and indirectly, cGMP. The sequence is that of Guanylate kinase from Schizosaccharomyces pombe (strain 972 / ATCC 24843) (Fission yeast).